Here is a 181-residue protein sequence, read N- to C-terminus: Adenylate kinase (181 aa).

ATP is bound at residue 10-15 (GAGKGT). Residues 30–59 (STGELFRKNIQDGTKLGVEAKRYLDAGDLV) are NMP. Residues Thr31, Arg36, 57–59 (DLV), 85–88 (GYPR), and Gln92 each bind AMP. An LID region spans residues 126–132 (GRGRADD). Arg127 serves as a coordination point for ATP. Residues Arg129 and Arg140 each coordinate AMP. ATP is bound at residue Gly166.

The protein belongs to the adenylate kinase family. In terms of assembly, monomer.

Its subcellular location is the cytoplasm. The catalysed reaction is AMP + ATP = 2 ADP. The protein operates within purine metabolism; AMP biosynthesis via salvage pathway; AMP from ADP: step 1/1. In terms of biological role, catalyzes the reversible transfer of the terminal phosphate group between ATP and AMP. Plays an important role in cellular energy homeostasis and in adenine nucleotide metabolism. This Mycobacterium ulcerans (strain Agy99) protein is Adenylate kinase.